The following is a 396-amino-acid chain: DNA replication and repair protein RecF (396 aa).

Residue 30–37 (GANGSGKT) participates in ATP binding.

The protein belongs to the RecF family.

It localises to the cytoplasm. Its function is as follows. The RecF protein is involved in DNA metabolism; it is required for DNA replication and normal SOS inducibility. RecF binds preferentially to single-stranded, linear DNA. It also seems to bind ATP. This is DNA replication and repair protein RecF from Thermomicrobium roseum (strain ATCC 27502 / DSM 5159 / P-2).